The chain runs to 658 residues: Biosynthetic arginine decarboxylase (658 aa).

K127 bears the N6-(pyridoxal phosphate)lysine mark. F307–Y317 lines the substrate pocket.

It belongs to the Orn/Lys/Arg decarboxylase class-II family. SpeA subfamily. In terms of assembly, homotetramer. It depends on pyridoxal 5'-phosphate as a cofactor. Mg(2+) serves as cofactor. Processed post-translationally to a 70 kDa mature form. In terms of processing, the N-terminus is blocked.

It localises to the periplasm. The catalysed reaction is L-arginine + H(+) = agmatine + CO2. It participates in amine and polyamine biosynthesis; agmatine biosynthesis; agmatine from L-arginine: step 1/1. Down-regulated by polyamine end products putrescine and spermidine. In terms of biological role, catalyzes the biosynthesis of agmatine from arginine. In Escherichia coli (strain K12), this protein is Biosynthetic arginine decarboxylase (speA).